The sequence spans 465 residues: Transposase for insertion sequence IS1202 (465 aa).

The 184-residue stretch at histidine 157–isoleucine 340 folds into the Integrase catalytic domain.

In terms of biological role, required for the transposition of the insertion element. The chain is Transposase for insertion sequence IS1202 from Streptococcus pneumoniae.